A 230-amino-acid chain; its full sequence is Iron-dependent repressor IdeR (230 aa).

An HTH dtxR-type domain is found at 4 to 65; it reads LVDTTEMYLR…VAGDRHLELT (62 aa).

It belongs to the DtxR/MntR family. Homodimer.

The protein resides in the cytoplasm. Its function is as follows. Metal-dependent DNA-binding protein that controls transcription of many genes involved in iron metabolism. The chain is Iron-dependent repressor IdeR (ideR) from Mycobacterium bovis (strain ATCC BAA-935 / AF2122/97).